We begin with the raw amino-acid sequence, 4377 residues long: E3 ubiquitin-protein ligase HUWE1 (4377 aa).

Phosphoserine occurs at positions 648 and 649. 3 disordered regions span residues 706 to 758 (KADG…VVGT), 978 to 1001 (DEKAGTTQGGKRSDGEQDGTAGSM), and 1018 to 1038 (TLAPMETDEPSSSDSKGKSKI). A compositionally biased stretch (acidic residues) spans 725 to 735 (ASSEDEEEEEV). A compositionally biased stretch (polar residues) spans 737 to 756 (AMQSFNSAQQNETEPNQQVV). Position 740 is a phosphoserine (Ser740). Ser1084 is subject to Phosphoserine. Over residues 1291–1302 (LSKEKEGSRGEE) the composition is skewed to basic and acidic residues. Residues 1291-1320 (LSKEKEGSRGEEEAGQEEGGSRREPQVNQQ) form a disordered region. The 40-residue stretch at 1316–1355 (QVNQQQLQQLMDMGFTREHAMEALLNTSTMEQATEYLLTH) folds into the UBA domain. Ser1368, Ser1370, Ser1382, and Ser1395 each carry phosphoserine. Residues 1370-1389 (SEEDQMMRAIAMSLGQDIPM) enclose the UIM domain. A disordered region spans residues 1396 to 1415 (PEEVACRKEEEERKAREKQE). The WWE domain maps to 1603–1680 (RAQMTKYLQS…ETGNRRPVML (78 aa)). The disordered stretch occupies residues 1690–1733 (KNSKSSNGQELEKTLEESKETDIKHKENKGNDIPLALESTNTEK). A compositionally biased stretch (basic and acidic residues) spans 1699 to 1719 (ELEKTLEESKETDIKHKENKG). Ser1907 carries the post-translational modification Phosphoserine. Disordered regions lie at residues 2019 to 2065 (APAE…SKPL), 2262 to 2343 (SLFG…QEMQ), and 2355 to 2479 (LLER…ASPL). Positions 2022–2033 (ETSTTGTSQGEA) are enriched in polar residues. Thr2035 carries the post-translational modification Phosphothreonine. Residues 2037–2057 (EETREGKKDKEGDRTSEEGKQ) are compositionally biased toward basic and acidic residues. Low complexity-rich tracts occupy residues 2262 to 2271 (SLFGSKSASS) and 2278 to 2291 (DAQGASQDSSSHQQ). Ser2266 is subject to Phosphoserine. An N6-acetyllysine modification is found at Lys2267. Composition is skewed to acidic residues over residues 2295 to 2306 (EPGEAEVQEEDH) and 2314 to 2325 (ADGDIMDGEAET). A phosphoserine mark is found at Ser2362, Ser2365, and Ser2391. Polar residues predominate over residues 2388–2398 (SNLSQASTLQA). Residues 2408–2472 (DPEDEEEHTQ…SEMELDEDYP (65 aa)) show a composition bias toward acidic residues. Phosphoserine occurs at positions 2527, 2532, and 2535. Position 2554 is a phosphothreonine (Thr2554). Ser2584, Ser2595, and Ser2619 each carry phosphoserine. Positions 2704 to 2716 (IIDKGKEDKENRD) are enriched in basic and acidic residues. 3 disordered regions span residues 2704–2970 (IIDK…GVDP), 2991–3012 (IRPPTRSAPSSNSSAPAVVGNP), and 3036–3059 (QQRAEQQRRELAQNASSDTPMDPV). Over residues 2717–2736 (QSAQCTVTKTNDSTEQNVSD) the composition is skewed to polar residues. A compositionally biased stretch (low complexity) spans 2738 to 2756 (TPMPDSYPTTPSSTDAPTS). Thr2751 carries the post-translational modification Phosphothreonine. Polar residues-rich tracts occupy residues 2818–2835 (AETTQMELSPAPTITSLS), 2847–2864 (AVSSQLEGSPMDTSSLAS), and 2877–2890 (AGSSEQPTAGSSTP). Residues Ser2826, Ser2833, Ser2835, Ser2861, Ser2887, and Ser2888 each carry the phosphoserine modification. Thr2889 carries the post-translational modification Phosphothreonine. 2 stretches are compositionally biased toward low complexity: residues 2913–2932 (PPEDSSPPASSESSSTRDSA) and 2993–3007 (PPTRSAPSSNSSAPA). At Ser2918 the chain carries Phosphoserine. A phosphoserine mark is found at Ser3116, Ser3117, Ser3122, Ser3127, and Ser3135. Position 3149 is an omega-N-methylarginine (Arg3149). Disordered stretches follow at residues 3243 to 3266 (PKLSTSEERGKKSSKSCASSSHEN), 3352 to 3383 (TQQRTKETNCESDRERGSKQACSPCSSQSSSS), 3405 to 3429 (GKNSVKSVPVSSGGEGETSPHSLEA), 3471 to 3514 (SEVQ…TTPV), and 3539 to 3566 (TPTTATTTVSTSTTKGSKSPAKVGEGGS). Residues 3355 to 3369 (RTKETNCESDRERGS) show a composition bias toward basic and acidic residues. A compositionally biased stretch (low complexity) spans 3370 to 3383 (KQACSPCSSQSSSS). Composition is skewed to low complexity over residues 3475 to 3503 (TNSSNSGSSTAATSNTSTTTTTTTTATAP) and 3539 to 3552 (TPTTATTTVSTSTT). 6 positions are modified to phosphoserine: Ser3557, Ser3663, Ser3753, Ser3758, Ser3760, and Ser3761. The segment at 3738–3759 (TRRANKKAKQTGRLGSSGLGSA) is disordered. Residues 3749-3759 (GRLGSSGLGSA) are compositionally biased toward low complexity. Disordered stretches follow at residues 3782 to 3850 (EGQR…LPLL) and 3897 to 3951 (RESK…SSSL). Residues 3794 to 3803 (TSESSNQSET) are compositionally biased toward polar residues. Ser3810, Ser3818, and Ser3830 each carry phosphoserine. Residues 3817–3828 (PSPSAQDTQSIV) show a composition bias toward polar residues. Thr3833 carries the phosphothreonine modification. Composition is skewed to basic and acidic residues over residues 3836–3845 (GEKEKEEKPP) and 3897–3918 (RESKPPVRDTRESQLAHIKDEP). Phosphoserine is present on residues Ser3909 and Ser3922. Over residues 3919-3928 (PPLSPAPLTP) the composition is skewed to pro residues. Residues Thr3927 and Thr3930 each carry the phosphothreonine modification. Over residues 3941 to 3951 (EPSSMHISSSL) the composition is skewed to polar residues. Residues 4041-4377 (SPEEMKNRLY…QECSEGFGLA (337 aa)) enclose the HECT domain. Residue Tyr4274 is modified to Phosphotyrosine. Cys4344 serves as the catalytic Glycyl thioester intermediate.

It belongs to the UPL family. TOM1/PTR1 subfamily. As to quaternary structure, interacts with isoform p19ARF of CDKN2A which strongly inhibits HUWE1 ubiquitin ligase activity. Interacts with MYCN, POLB and CDC6. Interacts with PA2G4. Interacts with NR1D1. Interacts with AMBRA1. Interacts with HAPSTR1. Interacts with HAPSTR2. In hepatocytes, interacts with PAQR3; the interaction promotes PPARA poylubiquitination and STUB1-mediated degradation. In terms of processing, phosphorylated on tyrosine; phosphorylation is probably required for its ability to inhibit TP53 transactivation. Widely expressed.

Its subcellular location is the cytoplasm. It localises to the nucleus. The protein localises to the mitochondrion. It catalyses the reaction S-ubiquitinyl-[E2 ubiquitin-conjugating enzyme]-L-cysteine + [acceptor protein]-L-lysine = [E2 ubiquitin-conjugating enzyme]-L-cysteine + N(6)-ubiquitinyl-[acceptor protein]-L-lysine.. The protein operates within protein modification; protein ubiquitination. E3 ubiquitin-protein ligase which mediates ubiquitination and subsequent proteasomal degradation of target proteins. Regulates apoptosis by catalyzing the polyubiquitination and degradation of MCL1. Mediates monoubiquitination of DNA polymerase beta (POLB) at 'Lys-41', 'Lys-61' and 'Lys-81', thereby playing a role in base-excision repair. Also ubiquitinates the p53/TP53 tumor suppressor and core histones including H1, H2A, H2B, H3 and H4. Ubiquitinates MFN2 to negatively regulate mitochondrial fusion in response to decreased stearoylation of TFRC. Ubiquitination of MFN2 also takes place following induction of mitophagy; AMBRA1 acts as a cofactor for HUWE1-mediated ubiquitination. Regulates neural differentiation and proliferation by catalyzing the polyubiquitination and degradation of MYCN. May regulate abundance of CDC6 after DNA damage by polyubiquitinating and targeting CDC6 to degradation. Mediates polyubiquitination of PA2G4. Acts in concert with MYCBP2 to regulate the circadian clock gene expression by promoting the lithium-induced ubiquination and degradation of NR1D1. Binds to an upstream initiator-like sequence in the preprodynorphin gene. Mediates HAPSTR1 degradation, but is also a required cofactor in the pathway by which HAPSTR1 governs stress signaling. Acts as a regulator of the JNK and NF-kappa-B signaling pathways by mediating assembly of heterotypic 'Lys-63'-/'Lys-48'-linked branched ubiquitin chains that are then recognized by TAB2: HUWE1 mediates branching of 'Lys-48'-linked chains of substrates initially modified with 'Lys-63'-linked conjugates by TRAF6. 'Lys-63'-/'Lys-48'-linked branched ubiquitin chains protect 'Lys-63'-linkages from CYLD deubiquitination. Ubiquitinates PPARA in hepatocytes. The protein is E3 ubiquitin-protein ligase HUWE1 (Huwe1) of Mus musculus (Mouse).